Here is a 104-residue protein sequence, read N- to C-terminus: Replication restart protein PriB (104 aa).

Positions 1–101 constitute an SSB domain; it reads MTNRLVLSGT…LHAEQIELID (101 aa).

The protein belongs to the PriB family. As to quaternary structure, homodimer. Interacts with PriA and DnaT. Component of the replication restart primosome. Primosome assembly occurs via a 'hand-off' mechanism. PriA binds to replication forks, subsequently PriB then DnaT bind; DnaT then displaces ssDNA to generate the helicase loading substrate.

Functionally, involved in the restart of stalled replication forks, which reloads the replicative helicase on sites other than the origin of replication; the PriA-PriB pathway is the major replication restart pathway. During primosome assembly it facilitates complex formation between PriA and DnaT on DNA; stabilizes PriA on DNA. Stimulates the DNA unwinding activity of PriA helicase. This is Replication restart protein PriB from Escherichia coli (strain ATCC 8739 / DSM 1576 / NBRC 3972 / NCIMB 8545 / WDCM 00012 / Crooks).